Here is a 397-residue protein sequence, read N- to C-terminus: Linalool dehydratase/isomerase (397 aa).

A signal peptide spans Met1–Ala26. Catalysis depends on Asp64, which acts as the Proton donor/acceptor. Cystine bridges form between Cys74/Cys127 and Cys196/Cys205. (2E)-geraniol is bound at residue Cys196.

As to quaternary structure, homotetramer. Homopentamer.

It localises to the periplasm. The enzyme catalyses (S)-linalool = beta-myrcene + H2O. It catalyses the reaction (2E)-geraniol = (S)-linalool. It functions in the pathway terpene metabolism; monoterpene degradation. Is inhibited by molecular oxygen, high salt concentrations (NaCl, KCl, or MgCl(2)), urea, and Ti(III)citrate. Activity is not affected by EDTA. Anaerobically catalyzes the stereospecific hydration of beta-myrcene to (3S)-linalool and the isomerization of (3S)-linalool to geraniol. Is thus involved in the initial steps of the anaerobic degradation of the monoterpene beta-myrcene. Also catalyzes the reverse reactions, i.e. the isomerization of geraniol to linalool and the dehydration of linalool to myrcene. In this direction, the formation of myrcene from geraniol may be seen as a detoxification process for the monoterpene alcohol. Shows a relatively broad substrate specificity and can use various geraniol and linalool derivatives. Substrates required a specific alpha-methylallyl alcohol signature motif. Neither the monoterpenes alpha- and beta-ocimene nor the monoterpenoids citronellol and nerol can be used as substrates. The protein is Linalool dehydratase/isomerase of Castellaniella defragrans (strain DSM 12143 / CCUG 39792 / 65Phen) (Alcaligenes defragrans).